The chain runs to 100 residues: Large ribosomal subunit protein uL23 (100 aa).

Belongs to the universal ribosomal protein uL23 family. As to quaternary structure, part of the 50S ribosomal subunit. Contacts protein L29, and trigger factor when it is bound to the ribosome.

Its function is as follows. One of the early assembly proteins it binds 23S rRNA. One of the proteins that surrounds the polypeptide exit tunnel on the outside of the ribosome. Forms the main docking site for trigger factor binding to the ribosome. In Aeromonas salmonicida (strain A449), this protein is Large ribosomal subunit protein uL23.